Here is a 490-residue protein sequence, read N- to C-terminus: UDP-N-acetylmuramate--L-alanine ligase (490 aa).

ATP is bound at residue 126-132 (GTHGKTT).

It belongs to the MurCDEF family.

It localises to the cytoplasm. The catalysed reaction is UDP-N-acetyl-alpha-D-muramate + L-alanine + ATP = UDP-N-acetyl-alpha-D-muramoyl-L-alanine + ADP + phosphate + H(+). It functions in the pathway cell wall biogenesis; peptidoglycan biosynthesis. Functionally, cell wall formation. The protein is UDP-N-acetylmuramate--L-alanine ligase of Sodalis glossinidius (strain morsitans).